The sequence spans 200 residues: A-type ATP synthase subunit E (200 aa).

This sequence belongs to the V-ATPase E subunit family. Has multiple subunits with at least A(3), B(3), C, D, E, F, H, I and proteolipid K(x).

It is found in the cell membrane. In terms of biological role, component of the A-type ATP synthase that produces ATP from ADP in the presence of a proton gradient across the membrane. This Aeropyrum pernix (strain ATCC 700893 / DSM 11879 / JCM 9820 / NBRC 100138 / K1) protein is A-type ATP synthase subunit E.